Here is a 66-residue protein sequence, read N- to C-terminus: uncharacterized protein (66 aa).

An HTH cro/C1-type domain is found at 5-59 (LKYYRALHNLTQEDLAKKLGVSRQTIIAIEKGKYDPSLKLAFKIAKFFGVKIEDI). The H-T-H motif DNA-binding region spans 16 to 35 (QEDLAKKLGVSRQTIIAIEK).

This is an uncharacterized protein from Methanocaldococcus jannaschii (strain ATCC 43067 / DSM 2661 / JAL-1 / JCM 10045 / NBRC 100440) (Methanococcus jannaschii).